Consider the following 371-residue polypeptide: Phospho-N-acetylmuramoyl-pentapeptide-transferase (371 aa).

9 consecutive transmembrane segments (helical) span residues 19–39 (LYWL…IYSG), 48–68 (IVAP…WAVP), 95–115 (TMGG…WVAA), 119–139 (NLLE…VGWF), 155–175 (AKLR…WLFL), 180–200 (ISGL…FLAI), 227–247 (AIAF…LMIF), 284–304 (AVGL…LFLV), and 349–369 (VVST…GLNA).

The protein belongs to the glycosyltransferase 4 family. MraY subfamily. It depends on Mg(2+) as a cofactor.

Its subcellular location is the cell inner membrane. The enzyme catalyses UDP-N-acetyl-alpha-D-muramoyl-L-alanyl-gamma-D-glutamyl-meso-2,6-diaminopimeloyl-D-alanyl-D-alanine + di-trans,octa-cis-undecaprenyl phosphate = di-trans,octa-cis-undecaprenyl diphospho-N-acetyl-alpha-D-muramoyl-L-alanyl-D-glutamyl-meso-2,6-diaminopimeloyl-D-alanyl-D-alanine + UMP. It participates in cell wall biogenesis; peptidoglycan biosynthesis. Catalyzes the initial step of the lipid cycle reactions in the biosynthesis of the cell wall peptidoglycan: transfers peptidoglycan precursor phospho-MurNAc-pentapeptide from UDP-MurNAc-pentapeptide onto the lipid carrier undecaprenyl phosphate, yielding undecaprenyl-pyrophosphoryl-MurNAc-pentapeptide, known as lipid I. The chain is Phospho-N-acetylmuramoyl-pentapeptide-transferase from Acaryochloris marina (strain MBIC 11017).